The sequence spans 354 residues: Rhodopsin (354 aa).

At 1–36 the chain is on the extracellular side; it reads MNGTEGPMFYVPMSNATGVVKSPYDYPQYYLVAPWA. Residues asparagine 2 and asparagine 15 are each glycosylated (N-linked (GlcNAc...) asparagine). Residues 37 to 61 form a helical membrane-spanning segment; sequence YGCLAAYMFFLIITGFPINFLTLYV. Over 62–73 the chain is Cytoplasmic; sequence TIEHKKLRTPLN. Residues 74 to 96 form a helical membrane-spanning segment; it reads YILLNLAISDLFMVFGGFTTTMY. Residues 97–110 lie on the Extracellular side of the membrane; it reads TSLHGYFVFGRIGC. Cysteines 110 and 187 form a disulfide. A helical transmembrane segment spans residues 111–133; it reads NLEGFFATLGGEMGLWSLVVLAF. The 'Ionic lock' involved in activated form stabilization signature appears at 134–136; it reads ERW. Residues 134–152 lie on the Cytoplasmic side of the membrane; sequence ERWMVVCKPVSNFRFGENH. A helical membrane pass occupies residues 153–173; sequence AIMGVVFTWFMACTCAVPPLV. The Extracellular portion of the chain corresponds to 174 to 202; that stretch reads GWSRYIPEGMQCSCGVDYYTRAPGYNNES. A helical membrane pass occupies residues 203-224; it reads FVIYMFLVHFIIPLIVIFFCYG. Topologically, residues 225–252 are cytoplasmic; that stretch reads RLVCTVKDAAAQQQESETTQRAEREVTR. Residues 253–274 form a helical membrane-spanning segment; that stretch reads MVVIMVIGFLICWIPYASVAWY. At 275-286 the chain is on the extracellular side; it reads IFTHQGSEFGPV. Residues 287–308 form a helical membrane-spanning segment; that stretch reads FMTVPAFFAKSAAVYNPCIYIC. The residue at position 296 (lysine 296) is an N6-(retinylidene)lysine. At 309-354 the chain is on the cytoplasmic side; it reads MNKQFRHCMITTLCCGKNPFEEEEGASTTASKTEASSVSSSSVSPA. Residues cysteine 322 and cysteine 323 are each lipidated (S-palmitoyl cysteine). The interval 333 to 354 is disordered; the sequence is GASTTASKTEASSVSSSSVSPA. The segment covering 334-354 has biased composition (low complexity); it reads ASTTASKTEASSVSSSSVSPA.

The protein belongs to the G-protein coupled receptor 1 family. Opsin subfamily. Post-translationally, phosphorylated on some or all of the serine and threonine residues present in the C-terminal region. Contains one covalently linked retinal chromophore.

It is found in the membrane. Its subcellular location is the cell projection. The protein localises to the cilium. It localises to the photoreceptor outer segment. Functionally, photoreceptor required for image-forming vision at low light intensity. While most salt water fish species use retinal as chromophore, most freshwater fish use 3-dehydroretinal, or a mixture of retinal and 3-dehydroretinal. Light-induced isomerization of 11-cis to all-trans retinal triggers a conformational change that activates signaling via G-proteins. Subsequent receptor phosphorylation mediates displacement of the bound G-protein alpha subunit by arrestin and terminates signaling. The sequence is that of Rhodopsin (rho) from Cyprinus carpio (Common carp).